The primary structure comprises 482 residues: Rho GTPase-activating protein 15 (482 aa).

Residues Ser51, Ser111, Ser205, Ser208, and Ser250 each carry the phosphoserine modification. The region spanning Met87–Asp198 is the PH domain. The Rho-GAP domain occupies Ser288–Phe477.

The protein resides in the cytoplasm. It localises to the membrane. Its function is as follows. GTPase activator for the Rho-type GTPases by converting them to an inactive GDP-bound state. Has activity toward RAC1. Overexpression results in an increase in actin stress fibers and cell contraction. The polypeptide is Rho GTPase-activating protein 15 (Arhgap15) (Rattus norvegicus (Rat)).